The sequence spans 318 residues: 26 kDa endochitinase 1 (318 aa).

The N-terminal stretch at 1 to 19 is a signal peptide; sequence MRAFVLFAVVAMAATMAVA. The 40-residue stretch at 20 to 59 folds into the Chitin-binding type-1 domain; it reads EQCGSQAGGATCPNCLCCSRFGWCGSTPYCGDGCQSQCSG. Cystine bridges form between C22–C37, C31–C43, C36–C49, C53–C57, C98–C160, C172–C180, and C279–C311. E142 functions as the Proton donor in the catalytic mechanism.

This sequence belongs to the glycosyl hydrolase 19 family. Chitinase class I subfamily.

It catalyses the reaction Random endo-hydrolysis of N-acetyl-beta-D-glucosaminide (1-&gt;4)-beta-linkages in chitin and chitodextrins.. Defense against chitin-containing fungal pathogens. This is 26 kDa endochitinase 1 from Hordeum vulgare (Barley).